The following is a 789-amino-acid chain: E3 UFM1-protein ligase 1 (789 aa).

Residues 2 to 212 form a required for E3 UFM1-protein ligase activity region; sequence AADWEEIRRL…VSNLITRYGF (211 aa). Disordered regions lie at residues 407–470 and 743–763; these read LENS…TGRN and SKKA…ADTI. Residues 444–453 are compositionally biased toward basic residues; that stretch reads KIKKTKKKGR. Residues 748–760 are compositionally biased toward acidic residues; the sequence is QEDDNKTEEEEGA.

The protein belongs to the UFL1 family. In terms of assembly, catalytic component of the UFM1 ribosome E3 ligase (UREL) complex. Interacts with E2-like enzyme UFC1.

It localises to the endoplasmic reticulum membrane. The protein resides in the cytoplasm. Its subcellular location is the cytosol. It is found in the nucleus. The protein localises to the chromosome. Its function is as follows. E3 protein ligase that mediates ufmylation, the covalent attachment of the ubiquitin-like modifier UFM1 to lysine residues on target proteins, and which plays a key role in various processes, such as ribosome recycling, response to DNA damage, interferon response or reticulophagy (also called ER-phagy). As part of the UREL complex, plays a key role in ribosome recycling by catalyzing mono-ufmylation of RPL26/uL24 subunit of the 60S ribosome. Ufmylation of RPL26/uL24 occurs on free 60S ribosomes following ribosome dissociation: it weakens the junction between post-termination 60S subunits and SEC61 translocons, promoting release and recycling of the large ribosomal subunit from the endoplasmic reticulum membrane. Ufmylation of RPL26/uL24 and subsequent 60S ribosome recycling either take place after normal termination of translation or after ribosome stalling during cotranslational translocation at the endoplasmic reticulum. Involved in reticulophagy in response to endoplasmic reticulum stress by mediating ufmylation of proteins such as CYB5R3 and RPN1, thereby promoting lysosomal degradation of ufmylated proteins. Ufmylation in response to endoplasmic reticulum stress is essential for processes such as hematopoiesis, blood vessel morphogenesis or inflammatory response. In Gallus gallus (Chicken), this protein is E3 UFM1-protein ligase 1.